A 241-amino-acid polypeptide reads, in one-letter code: ATP synthase subunit a (241 aa).

The next 5 helical transmembrane spans lie at 21-41 (LASILMVIITSLIVLVIAIAC), 84-104 (VTLILFIFVGNMLGLPFAIVI), 116-136 (DATVTLTLATMVILLTHYYGI), 183-203 (ILIGLLSSLIIGHAAWGWIIG), and 207-227 (LIAWQAFSIFIGTIQAYIFIM).

The protein belongs to the ATPase A chain family. As to quaternary structure, F-type ATPases have 2 components, CF(1) - the catalytic core - and CF(0) - the membrane proton channel. CF(1) has five subunits: alpha(3), beta(3), gamma(1), delta(1), epsilon(1). CF(0) has three main subunits: a(1), b(2) and c(9-12). The alpha and beta chains form an alternating ring which encloses part of the gamma chain. CF(1) is attached to CF(0) by a central stalk formed by the gamma and epsilon chains, while a peripheral stalk is formed by the delta and b chains.

The protein localises to the cell membrane. Its function is as follows. Key component of the proton channel; it plays a direct role in the translocation of protons across the membrane. The chain is ATP synthase subunit a from Staphylococcus carnosus (strain TM300).